We begin with the raw amino-acid sequence, 341 residues long: D-aspartate oxidase (341 aa).

Blocked amino end (Met) is present on methionine 1. Positions 36, 37, 43, 44, 50, 307, and 311 each coordinate FAD. The Microbody targeting signal signature appears at 339–341 (SKL).

It belongs to the DAMOX/DASOX family. In terms of assembly, monomer. Interacts with PEX5; the interaction is direct and required for localization of DDO to the peroxisome. Requires FAD as cofactor. In terms of tissue distribution, in the kidney, expressed in epithelial cells of the proximal tubules and in the liver (at protein level).

The protein resides in the peroxisome matrix. Its subcellular location is the cytoplasm. The protein localises to the cytosol. The enzyme catalyses D-aspartate + O2 + H2O = oxaloacetate + H2O2 + NH4(+). The catalysed reaction is D-glutamate + O2 + H2O = H2O2 + 2-oxoglutarate + NH4(+). Inhibited by phenylglyoxal; chemical modification of arginine residues in the enzyme with phenylglyoxal leads to the irreversible loss of activity towards dicarboxylic D-amino acids, paralleled by a transient appearance of activity versus monocarboxylic ones. Selectively catalyzes the oxidative deamination of acidic amino acids. Suppresses the level of D-aspartate in the brain, an amino acid that can act as an agonist for glutamate receptors. Protects the organism from the toxicity of D-amino acids. May also function in the intestine. The sequence is that of D-aspartate oxidase (DDO) from Bos taurus (Bovine).